Here is an 82-residue protein sequence, read N- to C-terminus: Ferredoxin (82 aa).

A 4Fe-4S ferredoxin-type domain is found at 3 to 31; the sequence is KYTIVDKDTCIACGACGAAAPDIYDYDDE. The [4Fe-4S] cluster site is built by Cys-12, Cys-15, Cys-18, and Cys-62.

Requires [4Fe-4S] cluster as cofactor.

Functionally, ferredoxins are iron-sulfur proteins that transfer electrons in a wide variety of metabolic reactions. This ferredoxin may act as a phosphodonor to cytochrome P450 BioI. The polypeptide is Ferredoxin (fer) (Bacillus subtilis (strain 168)).